Reading from the N-terminus, the 373-residue chain is MFRGKPNSIETLILQATDEKNTKEKWDVIMDACDQLSSTSGDVGRNSIKFLNKRLDTANANIQLLALTLTDAIVKNCKTSIVREISSRTFTDSLLKIASDSTTHNRVRSRIAVLVNEWAEIMKKDPNMSLMQDICEKIRKLDIVDLRAPKKPEKEAMNELELKREEEELQYALALSLSESTAQSNKVENPQSTKDEPLQKTNQRQESNLATSPASTVSRVRALYDFAATEQGELSFKKGDIILVLESVYKDWWKGSCKNAVGIFPVNYVQRVVEPTIEQQRQSAHMEQQVFDALPQIDELLDTLSTTSPDAADDDALQGKYHAMIALRPKLVRLIEKYASQKEELMDLNERLLVARRDYEKLYEQSMSEMRNF.

The region spanning 16–146 (ATDEKNTKEK…KIRKLDIVDL (131 aa)) is the VHS domain. A UIM domain is found at 164 to 183 (REEEELQYALALSLSESTAQ). Composition is skewed to polar residues over residues 180 to 192 (STAQ…NPQS) and 199 to 213 (QKTN…ATSP). A disordered region spans residues 180 to 213 (STAQSNKVENPQSTKDEPLQKTNQRQESNLATSP). The 60-residue stretch at 215 to 274 (STVSRVRALYDFAATEQGELSFKKGDIILVLESVYKDWWKGSCKNAVGIFPVNYVQRVVE) folds into the SH3 domain.

It belongs to the STAM family. As to quaternary structure, component of the ESCRT-0 complex composed of hse1 and sst4.

The protein resides in the endosome membrane. Its function is as follows. Component of the ESCRT-0 complex which is the sorting receptor for ubiquitinated cargo proteins at the multivesicular body (MVB). The chain is Class E vacuolar protein-sorting machinery protein hse1 (hse1) from Schizosaccharomyces pombe (strain 972 / ATCC 24843) (Fission yeast).